We begin with the raw amino-acid sequence, 206 residues long: Thymidylate kinase (206 aa).

7–14 provides a ligand contact to ATP; it reads GGEGVGKT.

Belongs to the thymidylate kinase family.

It catalyses the reaction dTMP + ATP = dTDP + ADP. Its function is as follows. Phosphorylation of dTMP to form dTDP in both de novo and salvage pathways of dTTP synthesis. The polypeptide is Thymidylate kinase (Synechococcus sp. (strain JA-2-3B'a(2-13)) (Cyanobacteria bacterium Yellowstone B-Prime)).